A 202-amino-acid polypeptide reads, in one-letter code: Small ribosomal subunit protein uS4 (202 aa).

The segment at Thr22–Ser43 is disordered. The S4 RNA-binding domain maps to Met90–Asn152.

Belongs to the universal ribosomal protein uS4 family. As to quaternary structure, part of the 30S ribosomal subunit. Contacts protein S5. The interaction surface between S4 and S5 is involved in control of translational fidelity.

Its function is as follows. One of the primary rRNA binding proteins, it binds directly to 16S rRNA where it nucleates assembly of the body of the 30S subunit. Functionally, with S5 and S12 plays an important role in translational accuracy. This Gloeothece citriformis (strain PCC 7424) (Cyanothece sp. (strain PCC 7424)) protein is Small ribosomal subunit protein uS4.